The sequence spans 385 residues: GDSL esterase/lipase At5g08460 (385 aa).

Residues methionine 1–alanine 35 form the signal peptide. Residue serine 56 is the Nucleophile of the active site. Residues asparagine 218 and asparagine 285 are each glycosylated (N-linked (GlcNAc...) asparagine). Active-site residues include aspartate 350 and histidine 353. Asparagine 368 and asparagine 378 each carry an N-linked (GlcNAc...) asparagine glycan.

Belongs to the 'GDSL' lipolytic enzyme family.

It is found in the secreted. The polypeptide is GDSL esterase/lipase At5g08460 (Arabidopsis thaliana (Mouse-ear cress)).